Reading from the N-terminus, the 280-residue chain is MGIEFKNVSYTYQAGTPFEGRALFDVNLKIEDASYTAFIGHTGSGKSTIMQLLNGLHIPTKGEVIVDDFSIKAGDKNKEIKFIRQKVGLVFQFPESQLFEETVLKDVAFGPQNFGISQIEAERLAEEKLRLVGISEDLFDKNPFELSGGQMRRVAIAGILAMEPKVLVLDEPTAGLDPKGRKELMTLFKNLHKKGMTIVLVTHLMDDVADYADYVYVLEAGKVTLSGQPKQIFQEVELLESKQLGVPKITKFAQRLSHKGLNLPSLPITINEFVEAIKHG.

The ABC transporter domain occupies 3–245; sequence IEFKNVSYTY…VELLESKQLG (243 aa). 40–47 contacts ATP; the sequence is GHTGSGKS.

It belongs to the ABC transporter superfamily. Energy-coupling factor EcfA family. Forms a stable energy-coupling factor (ECF) transporter complex composed of 2 membrane-embedded substrate-binding proteins (S component), 2 ATP-binding proteins (A component) and 2 transmembrane proteins (T component).

Its subcellular location is the cell membrane. In terms of biological role, ATP-binding (A) component of a common energy-coupling factor (ECF) ABC-transporter complex. Unlike classic ABC transporters this ECF transporter provides the energy necessary to transport a number of different substrates. This chain is Energy-coupling factor transporter ATP-binding protein EcfA2, found in Streptococcus agalactiae serotype Ia (strain ATCC 27591 / A909 / CDC SS700).